The chain runs to 502 residues: Probable cytosol aminopeptidase (502 aa).

Mn(2+) is bound by residues Lys-269 and Asp-274. Lys-281 is an active-site residue. Positions 292, 351, and 353 each coordinate Mn(2+). The active site involves Arg-355.

It belongs to the peptidase M17 family. Requires Mn(2+) as cofactor.

The protein localises to the cytoplasm. It catalyses the reaction Release of an N-terminal amino acid, Xaa-|-Yaa-, in which Xaa is preferably Leu, but may be other amino acids including Pro although not Arg or Lys, and Yaa may be Pro. Amino acid amides and methyl esters are also readily hydrolyzed, but rates on arylamides are exceedingly low.. It carries out the reaction Release of an N-terminal amino acid, preferentially leucine, but not glutamic or aspartic acids.. Its function is as follows. Presumably involved in the processing and regular turnover of intracellular proteins. Catalyzes the removal of unsubstituted N-terminal amino acids from various peptides. The protein is Probable cytosol aminopeptidase of Aliivibrio fischeri (strain MJ11) (Vibrio fischeri).